We begin with the raw amino-acid sequence, 272 residues long: ATP phosphoribosyltransferase regulatory subunit (272 aa).

This sequence belongs to the class-II aminoacyl-tRNA synthetase family. HisZ subfamily. Heteromultimer composed of HisG and HisZ subunits.

Its subcellular location is the cytoplasm. It functions in the pathway amino-acid biosynthesis; L-histidine biosynthesis; L-histidine from 5-phospho-alpha-D-ribose 1-diphosphate: step 1/9. Its function is as follows. Required for the first step of histidine biosynthesis. May allow the feedback regulation of ATP phosphoribosyltransferase activity by histidine. This Staphylococcus aureus (strain USA300) protein is ATP phosphoribosyltransferase regulatory subunit.